The chain runs to 456 residues: tRNA modification GTPase MnmE (456 aa).

3 residues coordinate (6S)-5-formyl-5,6,7,8-tetrahydrofolate: Arg23, Glu85, and Arg124. Residues 220–376 (GVAVLIAGKP…LKESIFQTFI (157 aa)) form the TrmE-type G domain. Asn230 serves as a coordination point for K(+). Residues 230 to 235 (NVGKSS), 249 to 255 (TSVPGTT), and 274 to 277 (DTAG) contribute to the GTP site. Ser234 is a Mg(2+) binding site. Positions 249, 251, and 254 each coordinate K(+). Mg(2+) is bound at residue Thr255. A (6S)-5-formyl-5,6,7,8-tetrahydrofolate-binding site is contributed by Lys456.

Belongs to the TRAFAC class TrmE-Era-EngA-EngB-Septin-like GTPase superfamily. TrmE GTPase family. As to quaternary structure, homodimer. Heterotetramer of two MnmE and two MnmG subunits. It depends on K(+) as a cofactor.

It is found in the cytoplasm. Its function is as follows. Exhibits a very high intrinsic GTPase hydrolysis rate. Involved in the addition of a carboxymethylaminomethyl (cmnm) group at the wobble position (U34) of certain tRNAs, forming tRNA-cmnm(5)s(2)U34. The protein is tRNA modification GTPase MnmE of Geobacter sulfurreducens (strain ATCC 51573 / DSM 12127 / PCA).